A 297-amino-acid chain; its full sequence is Sirohydrochlorin cobaltochelatase CbiKP (297 aa).

A signal peptide spans 1-28 (MSRHPMVTRLLCLVFSCLIILACSPAFA). Heme is bound at residue His124. The active-site Proton acceptor is His182. Co(2+) contacts are provided by His182, Glu212, and His244.

It belongs to the CbiK family. In terms of assembly, homotetramer; dimer of dimers.

It localises to the periplasm. It catalyses the reaction Co-sirohydrochlorin + 2 H(+) = sirohydrochlorin + Co(2+). The enzyme catalyses siroheme + 2 H(+) = sirohydrochlorin + Fe(2+). In terms of biological role, catalyzes the insertion of Co(2+) into sirohydrochlorin. To a lesser extent, is also able to insert Fe(2+) into sirohydrochlorin, yielding siroheme. Its periplasmic location means that it cannot participate in cobalamin biosynthesis and its genomic environment suggests it is likely to be associated with a heme or metal transport system. The chain is Sirohydrochlorin cobaltochelatase CbiKP (cbiKp) from Nitratidesulfovibrio vulgaris (strain ATCC 29579 / DSM 644 / CCUG 34227 / NCIMB 8303 / VKM B-1760 / Hildenborough) (Desulfovibrio vulgaris).